The sequence spans 427 residues: Four-jointed box protein 1 (427 aa).

Positions 1 to 18 (MRALSANLFAVLLMCALA) are cleaved as a signal peptide. N-linked (GlcNAc...) asparagine glycosylation is found at N81, N244, and N270.

The protein localises to the secreted. In terms of biological role, may act as an inhibitor of dendrite extension and branching. This Xiphophorus maculatus (Southern platyfish) protein is Four-jointed box protein 1 (fjx1).